The sequence spans 197 residues: Adenylate kinase (197 aa).

7–15 (ALPGSGKTT) contributes to the ATP binding site.

This sequence belongs to the archaeal adenylate kinase family.

The protein resides in the cytoplasm. The enzyme catalyses AMP + ATP = 2 ADP. In Pyrobaculum aerophilum (strain ATCC 51768 / DSM 7523 / JCM 9630 / CIP 104966 / NBRC 100827 / IM2), this protein is Adenylate kinase (adkA).